Consider the following 1115-residue polypeptide: Scavenger receptor cysteine-rich type 1 protein M130 (1115 aa).

The first 46 residues, 1-46, serve as a signal peptide directing secretion; sequence MDKLRMVLHENSGSADFRRCSAHLSSFTFAVVAVLSACLVTSSLGG. The Extracellular portion of the chain corresponds to 47–1044; the sequence is KDKELRLTGG…ESLHATGRSS (998 aa). 9 SRCR domains span residues 51–151, 158–258, 265–365, 372–472, 477–577, 582–682, 718–818, 823–925, and 928–1028; these read LRLT…VTCS, MGLV…VICL, LRVV…VTCS, LRLK…ITCS, PRLV…VVCS, IRLV…VICS, LRLV…VICS, LRLI…ITCA, and IRLQ…VTCS. 23 disulfides stabilise this stretch: Cys76–Cys140, Cys89–Cys150, Cys120–Cys130, Cys183–Cys247, Cys196–Cys257, Cys227–Cys237, Cys290–Cys354, Cys303–Cys364, Cys334–Cys344, Cys397–Cys461, Cys410–Cys471, Cys441–Cys451, Cys502–Cys566, Cys515–Cys576, Cys546–Cys556, Cys607–Cys671, Cys620–Cys681, Cys651–Cys661, Cys743–Cys807, Cys756–Cys817, Cys787–Cys797, Cys863–Cys924, and Cys894–Cys904. Asn105 is a glycosylation site (N-linked (GlcNAc...) asparagine). An N-linked (GlcNAc...) asparagine glycan is attached at Asn139. Asn936 carries N-linked (GlcNAc...) asparagine glycosylation. 3 disulfides stabilise this stretch: Cys953–Cys1017, Cys966–Cys1027, and Cys997–Cys1007. The helical transmembrane segment at 1045–1065 threads the bilayer; the sequence is FVALAIFGVILLACLIAFLIW. Residues 1066–1115 are Cytoplasmic-facing; it reads TQKRRQRQRLSVFSGGENSVHQIQYREMNSCLKADETDMLNPSGDHSEVQ. The Internalization signal signature appears at 1090-1093; the sequence is YREM.

As to quaternary structure, interacts with CSNK2B. A soluble form (sCD163) is produced by proteolytic shedding which can be induced by lipopolysaccharide, phorbol ester and Fc region of immunoglobulin gamma. This cleavage is dependent on protein kinase C and tyrosine kinases and can be blocked by protease inhibitors. The shedding is inhibited by the tissue inhibitor of metalloproteinase TIMP3, and thus probably induced by membrane-bound metalloproteinases ADAMs. Post-translationally, phosphorylated. As to expression, expressed in monocytes and macrophages. Detected only in one population of monocytes (CD163+) which is in advanced maturation stage.

The protein resides in the secreted. It is found in the cell membrane. In terms of biological role, involved in clearance and endocytosis of hemoglobin/haptoglobin complexes by macrophages and may thereby protect tissues from free hemoglobin-mediated oxidative damage. May play a role in the uptake and recycling of iron, via endocytosis of hemoglobin/haptoglobin and subsequent breakdown of heme. Binds hemoglobin/haptoglobin complexes in a calcium-dependent and pH-dependent manner. Induces a cascade of intracellular signals that involves tyrosine kinase-dependent calcium mobilization, inositol triphosphate production and secretion of IL6 and CSF1. May play a role in the process of infection of porcine monocytes/macrophages by African swine fever virus (ASFV). In case of porcine reproductive and respiratory syndrome virus (PRRSV), serves mediates virion attachment and plays a role in viral entry. After shedding, the soluble form (sCD163) may play an anti-inflammatory role. This is Scavenger receptor cysteine-rich type 1 protein M130 (CD163) from Sus scrofa (Pig).